Reading from the N-terminus, the 130-residue chain is Riboflavin kinase (130 aa).

12-17 (GLGVGA) provides a ligand contact to CDP. T39 and N41 together coordinate Mg(2+). The FMN site is built by T90 and E98. 103 to 106 (KNLR) contributes to the CDP binding site.

The protein belongs to the archaeal riboflavin kinase family. Mg(2+) is required as a cofactor.

The catalysed reaction is riboflavin + CTP = CDP + FMN + H(+). The protein operates within cofactor biosynthesis; FMN biosynthesis; FMN from riboflavin (CTP route): step 1/1. Functionally, catalyzes the CTP-dependent phosphorylation of riboflavin (vitamin B2) to form flavin mononucleotide (FMN). The chain is Riboflavin kinase from Staphylothermus marinus (strain ATCC 43588 / DSM 3639 / JCM 9404 / F1).